The chain runs to 734 residues: Polyribonucleotide nucleotidyltransferase (734 aa).

Positions 503 and 509 each coordinate Mg(2+). In terms of domain architecture, KH spans 570 to 629; it reads PKLSTIQVPVDAIGMIIGKGGETIRSITEETGAQINVDDDGTVTISSPNGESAAAAIETI. Residues 639 to 713 form the S1 motif domain; sequence GTIYMGKVKD…GKIRYALSIK (75 aa).

It belongs to the polyribonucleotide nucleotidyltransferase family. It depends on Mg(2+) as a cofactor.

It localises to the cytoplasm. It catalyses the reaction RNA(n+1) + phosphate = RNA(n) + a ribonucleoside 5'-diphosphate. Its function is as follows. Involved in mRNA degradation. Catalyzes the phosphorolysis of single-stranded polyribonucleotides processively in the 3'- to 5'-direction. This chain is Polyribonucleotide nucleotidyltransferase, found in Chlorobium phaeobacteroides (strain BS1).